Here is an 889-residue protein sequence, read N- to C-terminus: Oxysterol-binding protein-related protein 8 (889 aa).

At M1 the chain carries N-acetylmethionine. The segment at 1–129 (MEGGLADGEP…SLKVQKKNYR (129 aa)) is disordered. S14 is subject to Phosphoserine. Composition is skewed to polar residues over residues 28–46 (VVAN…MSQR) and 62–71 (PSLSPASPHS). Phosphoserine is present on residues S65 and S68. Basic and acidic residues-rich tracts occupy residues 73–88 (GFER…KDES), 95–109 (SKSE…EKDS), and 116–129 (TKKE…KNYR). The 118-residue stretch at 148–265 (VIVMADWLKI…WMDALELALK (118 aa)) folds into the PH domain. Phosphoserine occurs at positions 314, 328, and 342. The span at 322 to 336 (KDQDMYSDKSDKEND) shows a compositional bias: basic and acidic residues. The tract at residues 322–399 (KDQDMYSDKS…AGEASQTETV (78 aa)) is disordered. Basic and acidic residues predominate over residues 346-363 (VMGKSEESDTDTSERQDD). A 1,2-diacyl-sn-glycero-3-phospho-(1D-myo-inositol 4-phosphate)-binding positions include 420–425 (LSKVVL), 482–485 (KPYN), and 514–515 (HH). A 1,2-diacyl-sn-glycero-3-phospho-L-serine contacts are provided by residues 420–425 (LSKVVL) and N485. S540 serves as a coordination point for a 1,2-diacyl-sn-glycero-3-phospho-L-serine. The a 1,2-diacyl-sn-glycero-3-phospho-(1D-myo-inositol 4-phosphate) site is built by K706, E710, and R714. Residues 771-823 (KHRTPMVSVPKMKHKPTRQQKKVAKGYSSPEPDIQDSSGSEAQSVKPSTRRKK) are disordered. Residues 781 to 794 (KMKHKPTRQQKKVA) show a composition bias toward basic residues. The span at 805 to 817 (QDSSGSEAQSVKP) shows a compositional bias: polar residues. 4 positions are modified to phosphoserine: S807, S808, S810, and S814. Residues 871–888 (YFIIFLLILLQVIINFMF) traverse the membrane as a helical segment.

It belongs to the OSBP family. As to quaternary structure, interacts with SPAG5. Interacts with NUP62. As to expression, widely expressed. Expressed at higher level in macrophages.

It localises to the endoplasmic reticulum membrane. The protein localises to the nucleus membrane. Lipid transporter involved in lipid countertransport between the endoplasmic reticulum and the plasma membrane: specifically exchanges phosphatidylserine with phosphatidylinositol 4-phosphate (PI4P), delivering phosphatidylserine to the plasma membrane in exchange for PI4P, which is degraded by the SAC1/SACM1L phosphatase in the endoplasmic reticulum. Binds phosphatidylserine and PI4P in a mutually exclusive manner. Binds oxysterol, 25-hydroxycholesterol and cholesterol. The chain is Oxysterol-binding protein-related protein 8 (OSBPL8) from Homo sapiens (Human).